The chain runs to 309 residues: MDLTTWAIFPLLLGSIGVYSLYKLLQRLRSGAYLQDAVVVITGATSGLGRECAKVFYAAGTRLVLCGRSEEGLKNLVQELSQMRIKSAQLHKPHMVIFDLSDVEAVNSAANEILHLTGRVDILINNAGISYRGTILDTKVSVDRMVMDTNYFGPVALTKALIPSMIKNRRGHIVVISSVQGKISIPFRSAYSASKHATQAFFDCLRAEMSPYEIDVTVVNPGYIKTNLSLNAVTGDGSNYGVMDNNTAEGRTPEEVAQTVLRAVGERRKELLVAGLVPTLAVYLRTLAPTIFFSFMAARAKKERKLKDS.

Over 1 to 4 (MDLT) the chain is Cytoplasmic. The helical; Signal-anchor for type II membrane protein transmembrane segment at 5 to 25 (TWAIFPLLLGSIGVYSLYKLL) threads the bilayer. Residues 26 to 272 (QRLRSGAYLQ…AVGERRKELL (247 aa)) are Lumenal-facing. Positions 46 and 48 each coordinate NAD(+). Residue S178 participates in substrate binding. NAD(+) is bound by residues Y191, K195, and T226. The active-site Proton acceptor is Y191.

The protein belongs to the short-chain dehydrogenases/reductases (SDR) family.

It is found in the endoplasmic reticulum membrane. Its function is as follows. Putative oxidoreductase. The chain is Dehydrogenase/reductase SDR family member 7B (dhrs7b) from Xenopus tropicalis (Western clawed frog).